The chain runs to 118 residues: MASQTQGIQQLLQAEKRAAEKVADARKRKARRLKQAKEEAQMEVEQYRREREQEFQSKQQAAMGSQGNLSAEVEQATRRQVQGMQSSQQRNRERVLAQLLGMVCEVRPQVHPNYRVTV.

The disordered stretch occupies residues 23 to 91 (ADARKRKARR…QGMQSSQQRN (69 aa)). Over residues 35–55 (QAKEEAQMEVEQYRREREQEF) the composition is skewed to basic and acidic residues. Composition is skewed to polar residues over residues 56-69 (QSKQ…QGNL) and 78-89 (RRQVQGMQSSQQ).

This sequence belongs to the V-ATPase G subunit family. In terms of assembly, V-ATPase is a heteromultimeric enzyme made up of two complexes: the ATP-hydrolytic V1 complex and the proton translocation V0 complex. The V1 complex consists of three catalytic AB heterodimers that form a heterohexamer, three peripheral stalks each consisting of EG heterodimers, one central rotor including subunits D and F, and the regulatory subunits C and H. The proton translocation complex V0 consists of the proton transport subunit a, a ring of proteolipid subunits c9c'', rotary subunit d, subunits e and f, and the accessory subunits ATP6AP1/Ac45 and ATP6AP2/PRR.

The protein localises to the melanosome. It localises to the cytoplasmic vesicle. It is found in the clathrin-coated vesicle membrane. Its function is as follows. Subunit of the V1 complex of vacuolar(H+)-ATPase (V-ATPase), a multisubunit enzyme composed of a peripheral complex (V1) that hydrolyzes ATP and a membrane integral complex (V0) that translocates protons. V-ATPase is responsible for acidifying and maintaining the pH of intracellular compartments and in some cell types, is targeted to the plasma membrane, where it is responsible for acidifying the extracellular environment. The sequence is that of V-type proton ATPase subunit G 2 (Atp6v1g2) from Mus musculus (Mouse).